The sequence spans 310 residues: Repression factor of MSEs protein 1 (310 aa).

Disordered stretches follow at residues 83–155 (TQEV…EANA) and 192–230 (DGIRRRSSRISERDKRRSQSRLGSEEDEEGDGHDGDEGE). Residues 92–106 (RNTSSSSSSTRSNSS) are compositionally biased toward low complexity. Positions 107–120 (ADISDTEYSGENTP) are enriched in polar residues. Positions 127–136 (SRRRRTRSRA) are enriched in basic residues. Over residues 139–155 (RENSLPASLPSISEANA) the composition is skewed to polar residues. Residues 192 to 208 (DGIRRRSSRISERDKRR) are compositionally biased toward basic and acidic residues. Ser215 carries the phosphoserine modification.

As to quaternary structure, interacts directly with HST1 and SUM1. Required for the interaction between HST1 and SUM1.

The protein resides in the nucleus. In terms of biological role, tethering factor required for histone deacetylase HST1-mediated repression. Probably involved in targeting HST1 to a subset of SUM1-regulated genes. The protein is Repression factor of MSEs protein 1 (RFM1) of Saccharomyces cerevisiae (strain ATCC 204508 / S288c) (Baker's yeast).